The following is a 257-amino-acid chain: Type III pantothenate kinase (257 aa).

24 to 31 (MIGNSRLH) contributes to the ATP binding site. Residues Tyr96 and 100–103 (GIDR) contribute to the substrate site. The active-site Proton acceptor is the Asp102. Position 122 (Asp122) interacts with K(+). Thr125 is an ATP binding site. Position 180 (Thr180) interacts with substrate.

Belongs to the type III pantothenate kinase family. In terms of assembly, homodimer. It depends on NH4(+) as a cofactor. K(+) serves as cofactor.

The protein resides in the cytoplasm. It carries out the reaction (R)-pantothenate + ATP = (R)-4'-phosphopantothenate + ADP + H(+). It functions in the pathway cofactor biosynthesis; coenzyme A biosynthesis; CoA from (R)-pantothenate: step 1/5. In terms of biological role, catalyzes the phosphorylation of pantothenate (Pan), the first step in CoA biosynthesis. The sequence is that of Type III pantothenate kinase from Synechocystis sp. (strain ATCC 27184 / PCC 6803 / Kazusa).